We begin with the raw amino-acid sequence, 252 residues long: Sensory transduction protein LytR (252 aa).

Positions 2 to 116 (KALIVDDEPL…RINQAVNKVD (115 aa)) constitute a Response regulatory domain. 4-aspartylphosphate is present on Asp53. The 105-residue stretch at 147–251 (LPIEVDERIH…MKTFKQQLGL (105 aa)) folds into the HTH LytTR-type domain.

In terms of processing, phosphorylated by LytS.

It is found in the cytoplasm. In terms of biological role, member of the two-component regulatory system LytR/LytS that probably regulates genes involved in cell wall metabolism. In Staphylococcus epidermidis (strain ATCC 12228 / FDA PCI 1200), this protein is Sensory transduction protein LytR (lytR).